The following is a 499-amino-acid chain: Glutamate--tRNA ligase (499 aa).

The 'HIGH' region motif lies at Pro-12–Asn-22. The 'KMSKS' region motif lies at Lys-259–Arg-263. Lys-262 contributes to the ATP binding site.

It belongs to the class-I aminoacyl-tRNA synthetase family. Glutamate--tRNA ligase type 1 subfamily. Monomer.

The protein localises to the cytoplasm. The catalysed reaction is tRNA(Glu) + L-glutamate + ATP = L-glutamyl-tRNA(Glu) + AMP + diphosphate. Functionally, catalyzes the attachment of glutamate to tRNA(Glu) in a two-step reaction: glutamate is first activated by ATP to form Glu-AMP and then transferred to the acceptor end of tRNA(Glu). This Lactobacillus johnsonii (strain CNCM I-12250 / La1 / NCC 533) protein is Glutamate--tRNA ligase.